A 665-amino-acid polypeptide reads, in one-letter code: Zinc finger CCCH domain-containing protein 45 (665 aa).

Positions 1-55 are disordered; sequence MDDGDLSFDFEGGLDQPPAGGGGGPAPHSSDPGGVGGGGGGGGPGDGGGHGRGRG. The segment covering 33–50 has biased composition (gly residues); that stretch reads GGVGGGGGGGGPGDGGGH. 3 C3H1-type zinc fingers span residues 58–85, 86–113, and 114–139; these read SYRQ…HQFD, KARM…HSYD, and DVKE…HVKL. The disordered stretch occupies residues 167–256; sequence HNNYNQQGER…QATRIATPLP (90 aa). Polar residues predominate over residues 169-200; the sequence is NYNQQGERPQHPQGSGLPNQNSIDNTTTTTAQ. Positions 205–238 are enriched in low complexity; that stretch reads QQAQTTNQQPPQQQQQQQQQQQQQQKPNTNDQVQ. Over residues 239–250 the composition is skewed to polar residues; the sequence is SVPNGSSNQATR. In terms of domain architecture, YTH spans 260 to 395; it reads SRYFIVKSCN…FIGEQLASLL (136 aa). The stretch at 432–459 forms a coiled coil; sequence DIVLFDDNEEEEEEESEEEEEGNGQESQ. The span at 439-454 shows a compositional bias: acidic residues; it reads NEEEEEEESEEEEEGN. Disordered regions lie at residues 439 to 469 and 561 to 665; these read NEEE…GMMW and GPLM…SRKR. Positions 561–573 are enriched in gly residues; that stretch reads GPLMGGLGMGGPG. Positions 596-623 are enriched in basic and acidic residues; the sequence is TKREQRRPGGERGDRYETTSDQGSRGHD.

The chain is Zinc finger CCCH domain-containing protein 45 from Oryza sativa subsp. japonica (Rice).